A 564-amino-acid polypeptide reads, in one-letter code: Urocanate hydratase (564 aa).

NAD(+) contacts are provided by residues 54 to 55, Gln132, 178 to 180, Glu198, Arg203, 244 to 245, 269 to 273, 279 to 280, and Tyr328; these read GG, GMG, NA, QTSAH, and YL. Cys416 is a catalytic residue. Gly498 provides a ligand contact to NAD(+).

Belongs to the urocanase family. As to quaternary structure, homodimer. NAD(+) is required as a cofactor.

It catalyses the reaction 4-imidazolone-5-propanoate = trans-urocanate + H2O. The protein operates within amino-acid degradation; L-histidine degradation into L-glutamate; N-formimidoyl-L-glutamate from L-histidine: step 2/3. In Trifolium repens (Creeping white clover), this protein is Urocanate hydratase.